The sequence spans 89 residues: Gamma-bungarotoxin (89 aa).

An N-terminal signal peptide occupies residues 1–21 (MKTLLLTLVVVTIVCLDLGYT). Intrachain disulfides connect cysteine 24–cysteine 45, cysteine 27–cysteine 32, cysteine 38–cysteine 66, cysteine 70–cysteine 81, and cysteine 82–cysteine 87. Positions 54-56 (RGD) match the Cell attachment site motif.

It belongs to the three-finger toxin family. Ancestral subfamily. Orphan group V sub-subfamily. In terms of tissue distribution, expressed by the venom gland.

The protein localises to the secreted. Functionally, exhibits M2 muscarinic acetylcholine receptor (CHRM2)-blocking activity, but has a weak binding activity toward nicotinic AChR. Moreover, it inhibits collagen-induced platelet aggregation. This is Gamma-bungarotoxin from Bungarus multicinctus (Many-banded krait).